A 59-amino-acid chain; its full sequence is Large ribosomal subunit protein uL30 (59 aa).

The protein belongs to the universal ribosomal protein uL30 family. Part of the 50S ribosomal subunit.

The protein is Large ribosomal subunit protein uL30 of Geobacter sulfurreducens (strain ATCC 51573 / DSM 12127 / PCA).